A 184-amino-acid polypeptide reads, in one-letter code: NADH-dependent flavin reductase subunit 2 (184 aa).

This sequence belongs to the NADH-dependent flavin reductase family. In terms of assembly, requires LJ_0548 for activity, but the exact composition of the enzyme is unclear.

The enzyme catalyses a reduced flavin + NAD(+) = an oxidized flavin + NADH + 2 H(+). In terms of biological role, component of an enzyme that catalyzes the reduction of free flavins (FMN, FAD and riboflavin) by NADH; the reduced flavins produced by this reaction likely spontaneously react with oxygen, yielding hydrogen peroxide. Is responsible for the major H(2)O(2) production in L.johnsonii in the presence of oxygen. Cannot use NADPH instead of NADH as the electron donor. The chain is NADH-dependent flavin reductase subunit 2 (nfr2) from Lactobacillus johnsonii (strain CNCM I-12250 / La1 / NCC 533).